The chain runs to 344 residues: Photosystem II protein D1 (344 aa).

Helical transmembrane passes span Tyr-29 to Thr-46, His-118 to Leu-133, and Trp-142 to Ala-156. His-118 provides a ligand contact to chlorophyll a. Residue Tyr-126 coordinates pheophytin a. Asp-170 and Glu-189 together coordinate [CaMn4O5] cluster. The helical transmembrane segment at Phe-197–Leu-218 threads the bilayer. Chlorophyll a is bound at residue His-198. A quinone-binding positions include His-215 and Ser-264 to Phe-265. His-215 contributes to the Fe cation binding site. His-272 contacts Fe cation. Residues Phe-274–Met-288 form a helical membrane-spanning segment. [CaMn4O5] cluster is bound by residues His-332, Glu-333, Asp-342, and Ala-344.

The protein belongs to the reaction center PufL/M/PsbA/D family. In terms of assembly, PSII is composed of 1 copy each of membrane proteins PsbA, PsbB, PsbC, PsbD, PsbE, PsbF, PsbH, PsbI, PsbJ, PsbK, PsbL, PsbM, PsbT, PsbY, PsbZ, Psb30/Ycf12, at least 3 peripheral proteins of the oxygen-evolving complex and a large number of cofactors. It forms dimeric complexes. The D1/D2 heterodimer binds P680, chlorophylls that are the primary electron donor of PSII, and subsequent electron acceptors. It shares a non-heme iron and each subunit binds pheophytin, quinone, additional chlorophylls, carotenoids and lipids. D1 provides most of the ligands for the Mn4-Ca-O5 cluster of the oxygen-evolving complex (OEC). There is also a Cl(-1) ion associated with D1 and D2, which is required for oxygen evolution. The PSII complex binds additional chlorophylls, carotenoids and specific lipids. is required as a cofactor. Tyr-161 forms a radical intermediate that is referred to as redox-active TyrZ, YZ or Y-Z.

It localises to the plastid. The protein resides in the chloroplast thylakoid membrane. The enzyme catalyses 2 a plastoquinone + 4 hnu + 2 H2O = 2 a plastoquinol + O2. In terms of biological role, photosystem II (PSII) is a light-driven water:plastoquinone oxidoreductase that uses light energy to abstract electrons from H(2)O, generating O(2) and a proton gradient subsequently used for ATP formation. It consists of a core antenna complex that captures photons, and an electron transfer chain that converts photonic excitation into a charge separation. The D1/D2 (PsbA/PsbD) reaction center heterodimer binds P680, the primary electron donor of PSII as well as several subsequent electron acceptors. The protein is Photosystem II protein D1 of Bigelowiella natans (Pedinomonas minutissima).